We begin with the raw amino-acid sequence, 38 residues long: Small ribosomal subunit protein eS32 (38 aa).

The protein belongs to the eukaryotic ribosomal protein eS32 family. In terms of assembly, component of the small ribosomal subunit (SSU).

The polypeptide is Small ribosomal subunit protein eS32 (rpl41e) (Methanocaldococcus jannaschii (strain ATCC 43067 / DSM 2661 / JAL-1 / JCM 10045 / NBRC 100440) (Methanococcus jannaschii)).